A 102-amino-acid chain; its full sequence is NADH-quinone oxidoreductase subunit K (102 aa).

Helical transmembrane passes span 5 to 25 (LGHYLSLGAMLFALSVIGIFL), 31 to 51 (IVLLMAIELMLLAVNLNFVAF), and 62 to 82 (VFVFFILTVAAAESAIGLAIL).

Belongs to the complex I subunit 4L family. In terms of assembly, NDH-1 is composed of 14 different subunits. Subunits NuoA, H, J, K, L, M, N constitute the membrane sector of the complex.

Its subcellular location is the cell inner membrane. It catalyses the reaction a quinone + NADH + 5 H(+)(in) = a quinol + NAD(+) + 4 H(+)(out). Functionally, NDH-1 shuttles electrons from NADH, via FMN and iron-sulfur (Fe-S) centers, to quinones in the respiratory chain. The immediate electron acceptor for the enzyme in this species is believed to be ubiquinone. Couples the redox reaction to proton translocation (for every two electrons transferred, four hydrogen ions are translocated across the cytoplasmic membrane), and thus conserves the redox energy in a proton gradient. This chain is NADH-quinone oxidoreductase subunit K, found in Methylibium petroleiphilum (strain ATCC BAA-1232 / LMG 22953 / PM1).